A 387-amino-acid chain; its full sequence is Large ribosomal subunit protein uL3 (387 aa).

The residue at position 24 (Ser24) is a Phosphoserine. Lys39 is covalently cross-linked (Glycyl lysine isopeptide (Lys-Gly) (interchain with G-Cter in ubiquitin)). Thr103 is subject to Phosphothreonine. A Glycyl lysine isopeptide (Lys-Gly) (interchain with G-Cter in ubiquitin) cross-link involves residue Lys136. Position 156 is a phosphoserine (Ser156). His243 is modified (pros-methylhistidine). Ser297 carries the phosphoserine modification.

The protein belongs to the universal ribosomal protein uL3 family. Component of the large ribosomal subunit (LSU). Mature yeast ribosomes consist of a small (40S) and a large (60S) subunit. The 40S small subunit contains 1 molecule of ribosomal RNA (18S rRNA) and 33 different proteins (encoded by 57 genes). The large 60S subunit contains 3 rRNA molecules (25S, 5.8S and 5S rRNA) and 46 different proteins (encoded by 81 genes). uL3 forms together with ES39L one of the contact sites for the signal recognition particle that targets ribosomes to the endoplasmic reticulum membrane. Methylation at His-243 by HPM1 is required for proper 60S subunit assembly and promotes translational elongation fidelity.

It is found in the cytoplasm. Its function is as follows. Component of the ribosome, a large ribonucleoprotein complex responsible for the synthesis of proteins in the cell. The small ribosomal subunit (SSU) binds messenger RNAs (mRNAs) and translates the encoded message by selecting cognate aminoacyl-transfer RNA (tRNA) molecules. The large subunit (LSU) contains the ribosomal catalytic site termed the peptidyl transferase center (PTC), which catalyzes the formation of peptide bonds, thereby polymerizing the amino acids delivered by tRNAs into a polypeptide chain. The nascent polypeptides leave the ribosome through a tunnel in the LSU and interact with protein factors that function in enzymatic processing, targeting, and the membrane insertion of nascent chains at the exit of the ribosomal tunnel. uL3 plays a role in coordinating processes of accommodating the aminoacyl-tRNA in the PTC. This chain is Large ribosomal subunit protein uL3, found in Saccharomyces cerevisiae (strain ATCC 204508 / S288c) (Baker's yeast).